A 434-amino-acid chain; its full sequence is Glutamate-1-semialdehyde 2,1-aminomutase (434 aa).

Residue lysine 274 is modified to N6-(pyridoxal phosphate)lysine.

It belongs to the class-III pyridoxal-phosphate-dependent aminotransferase family. HemL subfamily. As to quaternary structure, homodimer. It depends on pyridoxal 5'-phosphate as a cofactor.

Its subcellular location is the cytoplasm. The enzyme catalyses (S)-4-amino-5-oxopentanoate = 5-aminolevulinate. Its pathway is porphyrin-containing compound metabolism; protoporphyrin-IX biosynthesis; 5-aminolevulinate from L-glutamyl-tRNA(Glu): step 2/2. This chain is Glutamate-1-semialdehyde 2,1-aminomutase, found in Acidovorax sp. (strain JS42).